The chain runs to 68 residues: MSLEERVMELESRMAFQDDTIQALNDVLVKQRRELDHLQLQMAAMLKRQEEMGSQFETFEEDAPPPHY.

The protein belongs to the SlyX family.

The sequence is that of Protein SlyX homolog from Pseudomonas syringae pv. syringae (strain B728a).